We begin with the raw amino-acid sequence, 125 residues long: Ribosome-binding factor A (125 aa).

It belongs to the RbfA family. Monomer. Binds 30S ribosomal subunits, but not 50S ribosomal subunits or 70S ribosomes.

The protein resides in the cytoplasm. Its function is as follows. One of several proteins that assist in the late maturation steps of the functional core of the 30S ribosomal subunit. Associates with free 30S ribosomal subunits (but not with 30S subunits that are part of 70S ribosomes or polysomes). Required for efficient processing of 16S rRNA. May interact with the 5'-terminal helix region of 16S rRNA. The chain is Ribosome-binding factor A from Methylobacillus flagellatus (strain ATCC 51484 / DSM 6875 / VKM B-1610 / KT).